Consider the following 189-residue polypeptide: MKYRYFAKKSFLFISMLAAFKTFAFELPSVPFPAPGSDEILFVVRDTTFNTNAPVNVEVSDFWTNRNVKRKPYKDVYGQSVFTTSGTKWLTSYMTVNINDKDYTMAAVSGYKHGHSAVFVKSDQVQLQHSYDSVANFVGEDEDSIPSKMYLDETPEYFVNVEAYESGSGNILVMCISNKESFFECKHQQ.

Positions Met1–Ala24 are cleaved as a signal peptide. Cysteines 175 and 185 form a disulfide.

Belongs to the TDH hemolysin family. As to quaternary structure, homodimer.

Its function is as follows. Bacterial hemolysins are exotoxins that attack blood cell membranes and cause cell rupture by mechanisms not clearly defined. The polypeptide is Thermostable direct hemolysin 2 (tdh2) (Vibrio parahaemolyticus serotype O3:K6 (strain RIMD 2210633)).